Reading from the N-terminus, the 545-residue chain is Arginine-containing cyclodipeptide synthase ateA (545 aa).

The span at 390 to 425 (GNQQTPTQSADMDSTVSHRQQQPASSRSYTSKQNQM) shows a compositional bias: polar residues. A disordered region spans residues 390–433 (GNQQTPTQSADMDSTVSHRQQQPASSRSYTSKQNQMPRPLVISV). The Conserved DDXXE motif signature appears at 434–438 (DDPSE).

This sequence belongs to the arginine-containing cyclodipeptide synthase family.

It carries out the reaction L-glutamyl-tRNA(Glu) + L-arginyl-tRNA(Arg) = cyclo(L-arginyl-L-glutamyl) + tRNA(Glu) + tRNA(Arg) + 2 H(+). The protein operates within secondary metabolite biosynthesis. In terms of biological role, arginine-containing cyclodipeptide synthase; part of the cluster that mediates the biosynthesis of a highly modified cyclo-arginine-glutamate dipeptide (cRE). Within the pathway, ateA acts as the scaffold-generating enzyme and is responsible for formation of the cyclo-Arg-Glu diketopiperazine (cRW) from L-arginyl-tRNA(Arg) + L-glutamyl-tRNA(Glu). Additional enzymes from the cluster then further modify the cyclo-Arg-Glu diketopiperazine (cRW) scaffold. This chain is Arginine-containing cyclodipeptide synthase ateA, found in Aspergillus terreus.